Reading from the N-terminus, the 562-residue chain is MRIFLVSVILINACWAGPIVETNYGKVEGIEYEGAEVFLAIPFAKPPVDDLRFEKPVAPDPWEDVYPATQYRNDCTPHYRLVAQFSSYSGEDCLTLNIIKPKKAEKLPVLFWIHGGGYEIGSASQHGYEFFAKRYASQGVIVATVQYRLGFMGFFSEGTSDVQGNWGLFDQAAALEFVKSNIENFGGDPNQITIWGYSAGAASVSQLTMSPYTRDSYSKAIIMSASSFVGWATGPNVVETSKQLAEILGCPWPGAKECMKKKSLHEIFDAIEVQGWTTGTIDILRWSPVIDGDFMTKNPEELIKESPVKPTLIGMSNKEGSYFAALNMGRVIADFGLSPEDMPKVDEEFISEIIGRKLLYNNRYGENREKVWNDILDFYVKQGKPAEVKDLNGFYVDRYSELLSDITFNVPILREITSRVERKTPVWTYRMDHYDKNIWKKHIPEQARGSPHANEYHYLFDMPVMAKIDMKKEPDSWIQNDLIDMVISFAKTGVPQIEDVEWRPVSDPDDVNFLNIRSDGVSIEHGLFQEPLAFWNELRQREGFDLIDPTNSAMHSSNKDEL.

The N-terminal stretch at 1–16 (MRIFLVSVILINACWA) is a signal peptide. An N-linked (GlcNAc...) asparagine; atypical glycan is attached at Asn73. An intrachain disulfide couples Cys75 to Cys93. The active-site Acyl-ester intermediate is the Ser198. Cys250 and Cys258 are disulfide-bonded. Active-site charge relay system residues include Glu319 and His452. Positions 559–562 (KDEL) match the Prevents secretion from ER motif.

This sequence belongs to the type-B carboxylesterase/lipase family. Expressed only in the intestine.

It localises to the endoplasmic reticulum lumen. It catalyses the reaction a carboxylic ester + H2O = an alcohol + a carboxylate + H(+). The chain is Gut esterase 1 (ges-1) from Caenorhabditis elegans.